Here is a 222-residue protein sequence, read N- to C-terminus: 26S proteasome non-ATPase regulatory subunit 9 (222 aa).

Residues 108–194 (QARDMAEARE…KPLNVTVIRR (87 aa)) enclose the PDZ domain. Phosphoserine is present on Ser-128.

It belongs to the proteasome subunit p27 family. Interacts with PSMC3. Part of a transient complex (modulator) containing PSMD9, PSMC6 and PSMC3 formed during the assembly of the 26S proteasome.

In terms of biological role, acts as a chaperone during the assembly of the 26S proteasome, specifically of the base subcomplex of the PA700/19S regulatory complex (RC). During the base subcomplex assembly is part of an intermediate PSMD9:PSMC6:PSMC3 module, also known as modulator trimer complex; PSMD9 is released during the further base assembly process. This Mus musculus (Mouse) protein is 26S proteasome non-ATPase regulatory subunit 9 (Psmd9).